We begin with the raw amino-acid sequence, 162 residues long: Photosystem II extrinsic protein V (162 aa).

The first 26 residues, 1–26, serve as a signal peptide directing secretion; that stretch reads MLKRYMLLAVATVFFAFQVLTSTATA. Heme c contacts are provided by cysteine 62, cysteine 65, histidine 66, and histidine 117.

It belongs to the cytochrome c family. PsbV subfamily. PSII is composed of 1 copy each of membrane proteins PsbA, PsbB, PsbC, PsbD, PsbE, PsbF, PsbH, PsbI, PsbJ, PsbK, PsbL, PsbM, PsbT, PsbX, PsbY, PsbZ, Psb30/Ycf12, peripheral proteins PsbO, CyanoQ (PsbQ), PsbU, PsbV and a large number of cofactors. It forms dimeric complexes. Requires heme c as cofactor.

The protein localises to the cellular thylakoid membrane. One of the extrinsic, lumenal subunits of photosystem II (PSII). PSII is a light-driven water plastoquinone oxidoreductase, using light energy to abstract electrons from H(2)O, generating a proton gradient subsequently used for ATP formation. The extrinsic proteins stabilize the structure of photosystem II oxygen-evolving complex (OEC), the ion environment of oxygen evolution and protect the OEC against heat-induced inactivation. Low-potential cytochrome c that plays a role in the OEC of PSII. The chain is Photosystem II extrinsic protein V from Acaryochloris marina (strain MBIC 11017).